The following is a 201-amino-acid chain: Orotate phosphoribosyltransferase (201 aa).

Residue 113 to 121 coordinates 5-phospho-alpha-D-ribose 1-diphosphate; that stretch reads EDIITTGKS. Positions 117 and 145 each coordinate orotate.

Belongs to the purine/pyrimidine phosphoribosyltransferase family. PyrE subfamily. In terms of assembly, homodimer. It depends on Mg(2+) as a cofactor.

The catalysed reaction is orotidine 5'-phosphate + diphosphate = orotate + 5-phospho-alpha-D-ribose 1-diphosphate. Its pathway is pyrimidine metabolism; UMP biosynthesis via de novo pathway; UMP from orotate: step 1/2. Its function is as follows. Catalyzes the transfer of a ribosyl phosphate group from 5-phosphoribose 1-diphosphate to orotate, leading to the formation of orotidine monophosphate (OMP). In Helicobacter pylori (strain P12), this protein is Orotate phosphoribosyltransferase.